Consider the following 179-residue polypeptide: Cell division protein SepF (179 aa).

Residues 19-55 (DSSLPYEKRDEPVFTSVNSSQEPALPMNQPSQSAGAK) form a disordered region. Residues 33–55 (TSVNSSQEPALPMNQPSQSAGAK) show a composition bias toward polar residues.

It belongs to the SepF family. In terms of assembly, homodimer. Interacts with FtsZ.

The protein localises to the cytoplasm. Cell division protein that is part of the divisome complex and is recruited early to the Z-ring. Probably stimulates Z-ring formation, perhaps through the cross-linking of FtsZ protofilaments. Its function overlaps with FtsA. The chain is Cell division protein SepF from Streptococcus pneumoniae (strain JJA).